Reading from the N-terminus, the 248-residue chain is Mannose-binding protein C (248 aa).

A signal peptide spans M1–S20. The tract at residues I36 to R112 is disordered. The region spanning G42–A99 is the Collagen-like domain. P47 bears the 4-hydroxyproline mark. Positions K49–E61 are enriched in basic and acidic residues. P73, P79, P82, and P88 each carry 4-hydroxyproline. Positions R112–L130 form a coiled coil. The C-type lectin domain maps to V134–E245. 2 disulfide bridges follow: C155–C244 and C222–C236.

As to quaternary structure, oligomeric complex of 3 or more homotrimers. Interacts with MASP1 and MASP2. Interacts with MEP1A and MEP1B and may inhibit their catalytic activity. Post-translationally, hydroxylation on proline residues within the sequence motif, GXPG, is most likely to be 4-hydroxy as this fits the requirement for 4-hydroxylation in vertebrates.

Its subcellular location is the secreted. Functionally, calcium-dependent lectin involved in innate immune defense. Binds mannose, fucose and N-acetylglucosamine on different microorganisms and activates the lectin complement pathway. Binds to late apoptotic cells, as well as to apoptotic blebs and to necrotic cells, but not to early apoptotic cells, facilitating their uptake by macrophages. The protein is Mannose-binding protein C (MBL2) of Saguinus oedipus (Cotton-top tamarin).